The sequence spans 421 residues: Gamma-glutamyl phosphate reductase (421 aa).

This sequence belongs to the gamma-glutamyl phosphate reductase family.

It is found in the cytoplasm. The enzyme catalyses L-glutamate 5-semialdehyde + phosphate + NADP(+) = L-glutamyl 5-phosphate + NADPH + H(+). Its pathway is amino-acid biosynthesis; L-proline biosynthesis; L-glutamate 5-semialdehyde from L-glutamate: step 2/2. Catalyzes the NADPH-dependent reduction of L-glutamate 5-phosphate into L-glutamate 5-semialdehyde and phosphate. The product spontaneously undergoes cyclization to form 1-pyrroline-5-carboxylate. This chain is Gamma-glutamyl phosphate reductase, found in Leifsonia xyli subsp. xyli (strain CTCB07).